The primary structure comprises 399 residues: ATP phosphoribosyltransferase regulatory subunit (399 aa).

This sequence belongs to the class-II aminoacyl-tRNA synthetase family. HisZ subfamily. In terms of assembly, heteromultimer composed of HisG and HisZ subunits.

It localises to the cytoplasm. The protein operates within amino-acid biosynthesis; L-histidine biosynthesis; L-histidine from 5-phospho-alpha-D-ribose 1-diphosphate: step 1/9. Its function is as follows. Required for the first step of histidine biosynthesis. May allow the feedback regulation of ATP phosphoribosyltransferase activity by histidine. The chain is ATP phosphoribosyltransferase regulatory subunit from Symbiobacterium thermophilum (strain DSM 24528 / JCM 14929 / IAM 14863 / T).